The sequence spans 368 residues: 4-hydroxy-3-methylbut-2-en-1-yl diphosphate synthase (flavodoxin) (368 aa).

The [4Fe-4S] cluster site is built by Cys-271, Cys-274, Cys-306, and Glu-313.

It belongs to the IspG family. The cofactor is [4Fe-4S] cluster.

The enzyme catalyses (2E)-4-hydroxy-3-methylbut-2-enyl diphosphate + oxidized [flavodoxin] + H2O + 2 H(+) = 2-C-methyl-D-erythritol 2,4-cyclic diphosphate + reduced [flavodoxin]. It functions in the pathway isoprenoid biosynthesis; isopentenyl diphosphate biosynthesis via DXP pathway; isopentenyl diphosphate from 1-deoxy-D-xylulose 5-phosphate: step 5/6. In terms of biological role, converts 2C-methyl-D-erythritol 2,4-cyclodiphosphate (ME-2,4cPP) into 1-hydroxy-2-methyl-2-(E)-butenyl 4-diphosphate. This Haemophilus influenzae (strain ATCC 51907 / DSM 11121 / KW20 / Rd) protein is 4-hydroxy-3-methylbut-2-en-1-yl diphosphate synthase (flavodoxin).